The following is a 157-amino-acid chain: Aspartate carbamoyltransferase regulatory chain (157 aa).

Zn(2+) is bound by residues Cys-108, Cys-113, Cys-138, and Cys-141.

The protein belongs to the PyrI family. Contains catalytic and regulatory chains. Zn(2+) is required as a cofactor.

Involved in allosteric regulation of aspartate carbamoyltransferase. The chain is Aspartate carbamoyltransferase regulatory chain from Ignicoccus hospitalis (strain KIN4/I / DSM 18386 / JCM 14125).